The following is a 122-amino-acid chain: Large ribosomal subunit protein uL14 (122 aa).

Belongs to the universal ribosomal protein uL14 family. In terms of assembly, part of the 50S ribosomal subunit. Forms a cluster with proteins L3 and L19. In the 70S ribosome, L14 and L19 interact and together make contacts with the 16S rRNA in bridges B5 and B8.

Its function is as follows. Binds to 23S rRNA. Forms part of two intersubunit bridges in the 70S ribosome. The protein is Large ribosomal subunit protein uL14 of Syntrophus aciditrophicus (strain SB).